We begin with the raw amino-acid sequence, 336 residues long: Ketol-acid reductoisomerase (NADP(+)) 1 (336 aa).

The KARI N-terminal Rossmann domain maps to 2–181; that stretch reads AKVYYEKDVT…GATRAGVLET (180 aa). NADP(+) is bound by residues 25–28, Arg-48, Ser-52, and 82–85; these read YGSQ and DELQ. His-107 is an active-site residue. An NADP(+)-binding site is contributed by Gly-133. The region spanning 182-327 is the KARI C-terminal knotted domain; that stretch reads TFKEETETDL…RKLREMMPFV (146 aa). Mg(2+)-binding residues include Asp-190, Glu-194, Glu-226, and Glu-230. Substrate is bound at residue Ser-251.

The protein belongs to the ketol-acid reductoisomerase family. It depends on Mg(2+) as a cofactor.

The catalysed reaction is (2R)-2,3-dihydroxy-3-methylbutanoate + NADP(+) = (2S)-2-acetolactate + NADPH + H(+). It catalyses the reaction (2R,3R)-2,3-dihydroxy-3-methylpentanoate + NADP(+) = (S)-2-ethyl-2-hydroxy-3-oxobutanoate + NADPH + H(+). The protein operates within amino-acid biosynthesis; L-isoleucine biosynthesis; L-isoleucine from 2-oxobutanoate: step 2/4. It participates in amino-acid biosynthesis; L-valine biosynthesis; L-valine from pyruvate: step 2/4. Functionally, involved in the biosynthesis of branched-chain amino acids (BCAA). Catalyzes an alkyl-migration followed by a ketol-acid reduction of (S)-2-acetolactate (S2AL) to yield (R)-2,3-dihydroxy-isovalerate. In the isomerase reaction, S2AL is rearranged via a Mg-dependent methyl migration to produce 3-hydroxy-3-methyl-2-ketobutyrate (HMKB). In the reductase reaction, this 2-ketoacid undergoes a metal-dependent reduction by NADPH to yield (R)-2,3-dihydroxy-isovalerate. This chain is Ketol-acid reductoisomerase (NADP(+)) 1, found in Bacillus cereus (strain ZK / E33L).